The chain runs to 483 residues: Aspartyl/glutamyl-tRNA(Asn/Gln) amidotransferase subunit B (483 aa).

The protein belongs to the GatB/GatE family. GatB subfamily. Heterotrimer of A, B and C subunits.

It carries out the reaction L-glutamyl-tRNA(Gln) + L-glutamine + ATP + H2O = L-glutaminyl-tRNA(Gln) + L-glutamate + ADP + phosphate + H(+). The catalysed reaction is L-aspartyl-tRNA(Asn) + L-glutamine + ATP + H2O = L-asparaginyl-tRNA(Asn) + L-glutamate + ADP + phosphate + 2 H(+). Functionally, allows the formation of correctly charged Asn-tRNA(Asn) or Gln-tRNA(Gln) through the transamidation of misacylated Asp-tRNA(Asn) or Glu-tRNA(Gln) in organisms which lack either or both of asparaginyl-tRNA or glutaminyl-tRNA synthetases. The reaction takes place in the presence of glutamine and ATP through an activated phospho-Asp-tRNA(Asn) or phospho-Glu-tRNA(Gln). The sequence is that of Aspartyl/glutamyl-tRNA(Asn/Gln) amidotransferase subunit B from Rickettsia africae (strain ESF-5).